Here is a 360-residue protein sequence, read N- to C-terminus: ELAV-like protein 2 (360 aa).

The disordered stretch occupies residues 1–36; sequence METQLSNGPTCNNTANGPTTVNNNCSSPVDSGNTED. 2 consecutive RRM domains span residues 39 to 117 and 125 to 205; these read TNLI…YARP and ANLY…FANN. Ser221 carries the post-translational modification Phosphoserine. One can recognise an RRM 3 domain in the interval 277–355; sequence WCIFVYNLAP…RVLQVSFKTN (79 aa).

It belongs to the RRM elav family. In terms of assembly, interacts with IGF2BP1. Interacts with MAP1B light chain LC1. As to expression, brain; neural-specific. Expressed in the hippocampus.

Functionally, RNA-binding protein that binds to the 3' untranslated region (3'UTR) of target mRNAs. Seems to recognize a GAAA motif. Can bind to its own 3'UTR, the FOS 3'UTR and the ID 3'UTR. In Mus musculus (Mouse), this protein is ELAV-like protein 2 (Elavl2).